A 180-amino-acid polypeptide reads, in one-letter code: Large ribosomal subunit protein uL5 (180 aa).

This sequence belongs to the universal ribosomal protein uL5 family. As to quaternary structure, part of the 50S ribosomal subunit; part of the 5S rRNA/L5/L18/L25 subcomplex. Contacts the 5S rRNA and the P site tRNA. Forms a bridge to the 30S subunit in the 70S ribosome.

Functionally, this is one of the proteins that bind and probably mediate the attachment of the 5S RNA into the large ribosomal subunit, where it forms part of the central protuberance. In the 70S ribosome it contacts protein S13 of the 30S subunit (bridge B1b), connecting the 2 subunits; this bridge is implicated in subunit movement. Contacts the P site tRNA; the 5S rRNA and some of its associated proteins might help stabilize positioning of ribosome-bound tRNAs. In Chlamydia trachomatis serovar L2 (strain ATCC VR-902B / DSM 19102 / 434/Bu), this protein is Large ribosomal subunit protein uL5.